Consider the following 675-residue polypeptide: UvrABC system protein B (675 aa).

The region spanning 32 to 417 (EGLSDGLAYQ…EHAGQVVEQV (386 aa)) is the Helicase ATP-binding domain. 45-52 (GVTGSGKT) contacts ATP. A Beta-hairpin motif is present at residues 98–121 (YYDYYQPEAYVPSRDLFIEKDSAI). Residues 436 to 602 (QVDDLMSEIN…QIKKQVKDII (167 aa)) form the Helicase C-terminal domain. Residues 634–669 (IKEIAKLEKAMQQAARDLQFEEAAVLRDRIRNIKEN) form the UVR domain.

The protein belongs to the UvrB family. As to quaternary structure, forms a heterotetramer with UvrA during the search for lesions. Interacts with UvrC in an incision complex.

The protein localises to the cytoplasm. Functionally, the UvrABC repair system catalyzes the recognition and processing of DNA lesions. A damage recognition complex composed of 2 UvrA and 2 UvrB subunits scans DNA for abnormalities. Upon binding of the UvrA(2)B(2) complex to a putative damaged site, the DNA wraps around one UvrB monomer. DNA wrap is dependent on ATP binding by UvrB and probably causes local melting of the DNA helix, facilitating insertion of UvrB beta-hairpin between the DNA strands. Then UvrB probes one DNA strand for the presence of a lesion. If a lesion is found the UvrA subunits dissociate and the UvrB-DNA preincision complex is formed. This complex is subsequently bound by UvrC and the second UvrB is released. If no lesion is found, the DNA wraps around the other UvrB subunit that will check the other stand for damage. The polypeptide is UvrABC system protein B (Neisseria gonorrhoeae).